The sequence spans 692 residues: Vitamin B12-dependent ribonucleoside-diphosphate reductase (692 aa).

The region spanning 7–95 (AKVRRRDGTL…IYRQRRAELR (89 aa)) is the ATP-cone domain. Residues S177, 192–193 (GC), G221, 375–379 (NPCGE), and 520–524 (PTGTI) each bind substrate. C193 and C388 are joined by a disulfide. N375 acts as the Proton acceptor in catalysis. The Cysteine radical intermediate role is filled by C377. E379 serves as the catalytic Proton acceptor.

This sequence belongs to the ribonucleoside diphosphate reductase class-2 family. The cofactor is adenosylcob(III)alamin.

It carries out the reaction a 2'-deoxyribonucleoside 5'-diphosphate + [thioredoxin]-disulfide + H2O = a ribonucleoside 5'-diphosphate + [thioredoxin]-dithiol. Provides the precursors necessary for DNA synthesis. Catalyzes the biosynthesis of deoxyribonucleotides from the corresponding ribonucleotides. This chain is Vitamin B12-dependent ribonucleoside-diphosphate reductase (nrdZ), found in Mycobacterium tuberculosis (strain CDC 1551 / Oshkosh).